Consider the following 163-residue polypeptide: Transcriptional repressor NrdR (163 aa).

A zinc finger spans residues 3–34 (CPFCAYADTRVVDSRLADDGGSVRRRRECPQC). Residues 49-139 (PVVVKTDGRR…VYRRFEDVDA (91 aa)) form the ATP-cone domain.

This sequence belongs to the NrdR family. Zn(2+) serves as cofactor.

Negatively regulates transcription of bacterial ribonucleotide reductase nrd genes and operons by binding to NrdR-boxes. This Acidithiobacillus ferrooxidans (strain ATCC 23270 / DSM 14882 / CIP 104768 / NCIMB 8455) (Ferrobacillus ferrooxidans (strain ATCC 23270)) protein is Transcriptional repressor NrdR.